A 218-amino-acid polypeptide reads, in one-letter code: Protein-methionine-sulfoxide reductase heme-binding subunit MsrQ (218 aa).

The next 5 membrane-spanning stretches (helical) occupy residues 14-34, 60-80, 86-106, 121-141, and 155-175; these read AVHAAVLAPIALLGWQFWQVW, LLLITLAITPLRQLTGQAVLI, LGLYTFFYASVHLTAYLWLDL, PYITVGFTAWLLLVPLAITST, and LHMLIYPIGLLAVLHFWWLVK.

The protein belongs to the MsrQ family. As to quaternary structure, heterodimer of a catalytic subunit (MsrP) and a heme-binding subunit (MsrQ). Requires FMN as cofactor. Heme b serves as cofactor.

Its subcellular location is the cell inner membrane. In terms of biological role, part of the MsrPQ system that repairs oxidized periplasmic proteins containing methionine sulfoxide residues (Met-O), using respiratory chain electrons. Thus protects these proteins from oxidative-stress damage caused by reactive species of oxygen and chlorine generated by the host defense mechanisms. MsrPQ is essential for the maintenance of envelope integrity under bleach stress, rescuing a wide series of structurally unrelated periplasmic proteins from methionine oxidation. MsrQ provides electrons for reduction to the reductase catalytic subunit MsrP, using the quinone pool of the respiratory chain. The chain is Protein-methionine-sulfoxide reductase heme-binding subunit MsrQ from Xanthomonas campestris pv. campestris (strain B100).